Here is a 675-residue protein sequence, read N- to C-terminus: NADH-ubiquinone oxidoreductase 75 kDa subunit (675 aa).

Residues 2–80 (KNISFKVNDF…SMNIYTNTLK (79 aa)) form the 2Fe-2S ferredoxin-type domain. Positions 36, 47, 50, and 64 each coordinate [2Fe-2S] cluster. Residues 80–119 (KVKKARESVLEFLLANHPLDCPICDQGGECDLQDQSVVFG) enclose the 4Fe-4S His(Cys)3-ligated-type domain. His96, Cys100, Cys103, Cys109, Cys148, Cys151, Cys154, and Cys198 together coordinate [4Fe-4S] cluster. The 57-residue stretch at 217–273 (LKSYNSIDVLDSLHSNIRVDIRGTKIMRILPRVNSELNEDWITDKIRFSYDSFRRQR) folds into the 4Fe-4S Mo/W bis-MGD-type domain.

This sequence belongs to the complex I 75 kDa subunit family. As to quaternary structure, complex I is composed of about 30 different subunits. The cofactor is [2Fe-2S] cluster. Requires [4Fe-4S] cluster as cofactor.

Its subcellular location is the mitochondrion inner membrane. The catalysed reaction is a ubiquinone + NADH + 5 H(+)(in) = a ubiquinol + NAD(+) + 4 H(+)(out). In terms of biological role, core subunit of the mitochondrial membrane respiratory chain NADH dehydrogenase (Complex I) that is believed to belong to the minimal assembly required for catalysis. Complex I functions in the transfer of electrons from NADH to the respiratory chain. The immediate electron acceptor for the enzyme is believed to be ubiquinone. This is the largest subunit of complex I and it is a component of the iron-sulfur (IP) fragment of the enzyme. It may form part of the active site crevice where NADH is oxidized. The sequence is that of NADH-ubiquinone oxidoreductase 75 kDa subunit (NAD11) from Acanthamoeba castellanii (Amoeba).